The primary structure comprises 129 residues: uncharacterized protein (129 aa).

The helical transmembrane segment at 46 to 66 (FFHFFFSFLLHLISPAVTGGI) threads the bilayer.

The protein localises to the membrane. This is an uncharacterized protein from Saccharomyces cerevisiae (strain ATCC 204508 / S288c) (Baker's yeast).